The sequence spans 365 residues: UDP-N-acetylglucosamine--N-acetylmuramyl-(pentapeptide) pyrophosphoryl-undecaprenol N-acetylglucosamine transferase (365 aa).

Residues Thr20–Gly22, Asn132, Arg168, Ser196, Ile253, and Gln298 contribute to the UDP-N-acetyl-alpha-D-glucosamine site.

The protein belongs to the glycosyltransferase 28 family. MurG subfamily.

The protein localises to the cell inner membrane. It catalyses the reaction di-trans,octa-cis-undecaprenyl diphospho-N-acetyl-alpha-D-muramoyl-L-alanyl-D-glutamyl-meso-2,6-diaminopimeloyl-D-alanyl-D-alanine + UDP-N-acetyl-alpha-D-glucosamine = di-trans,octa-cis-undecaprenyl diphospho-[N-acetyl-alpha-D-glucosaminyl-(1-&gt;4)]-N-acetyl-alpha-D-muramoyl-L-alanyl-D-glutamyl-meso-2,6-diaminopimeloyl-D-alanyl-D-alanine + UDP + H(+). It participates in cell wall biogenesis; peptidoglycan biosynthesis. In terms of biological role, cell wall formation. Catalyzes the transfer of a GlcNAc subunit on undecaprenyl-pyrophosphoryl-MurNAc-pentapeptide (lipid intermediate I) to form undecaprenyl-pyrophosphoryl-MurNAc-(pentapeptide)GlcNAc (lipid intermediate II). In Ralstonia nicotianae (strain ATCC BAA-1114 / GMI1000) (Ralstonia solanacearum), this protein is UDP-N-acetylglucosamine--N-acetylmuramyl-(pentapeptide) pyrophosphoryl-undecaprenol N-acetylglucosamine transferase.